The sequence spans 548 residues: Esterase-5A (548 aa).

An N-terminal signal peptide occupies residues 1-19; the sequence is MHLVRWLICLIQLWIQLGA. Cys87 and Cys106 are disulfide-bonded. N-linked (GlcNAc...) asparagine glycosylation is found at Asn95 and Asn116. Ser210 functions as the Acyl-ester intermediate in the catalytic mechanism. Residues Cys262 and Cys274 are joined by a disulfide bond. Residue Asn479 is glycosylated (N-linked (GlcNAc...) asparagine). Residues Cys518 and Cys539 are joined by a disulfide bond.

It belongs to the type-B carboxylesterase/lipase family.

It is found in the secreted. It catalyses the reaction a carboxylic ester + H2O = an alcohol + a carboxylate + H(+). This Drosophila persimilis (Fruit fly) protein is Esterase-5A (Est-5A).